The chain runs to 544 residues: Prolyl 4-hydroxylase subunit alpha-3 (544 aa).

Positions M1–G19 are cleaved as a signal peptide. The stretch at L107–E131 forms a coiled coil. The stretch at E227–N260 is one TPR repeat. N-linked (GlcNAc...) asparagine glycosylation is present at N248. One can recognise a Fe2OG dioxygenase domain in the interval Y422–E529. Residues H440 and D442 each coordinate Fe cation. N482 carries an N-linked (GlcNAc...) asparagine glycan. H510 serves as a coordination point for Fe cation. K520 contributes to the 2-oxoglutarate binding site.

This sequence belongs to the P4HA family. As to quaternary structure, heterotetramer of two alpha-3 chains and two beta chains (the beta chain is the multi-functional PDI). It depends on Fe(2+) as a cofactor. Requires L-ascorbate as cofactor. Post-translationally, N-glycosylation plays no role in the catalytic activity.

The protein localises to the endoplasmic reticulum lumen. The catalysed reaction is L-prolyl-[collagen] + 2-oxoglutarate + O2 = trans-4-hydroxy-L-prolyl-[collagen] + succinate + CO2. In terms of biological role, catalyzes the post-translational formation of 4-hydroxyproline in -Xaa-Pro-Gly- sequences in collagens and other proteins. This is Prolyl 4-hydroxylase subunit alpha-3 (P4HA3) from Bos taurus (Bovine).